The following is a 754-amino-acid chain: Nibrin (754 aa).

The FHA domain occupies Tyr-24 to Met-83. 2 consecutive BRCT domains span residues Lys-105–Leu-181 and Gly-224–Ile-315. The interval Glu-111–His-328 is mediates interaction with SP100. An interaction with MTOR, MAPKAP1 and RICTOR region spans residues Ile-221–Thr-402. Ser-278 carries the post-translational modification Phosphoserine; by ATM. Residues Gln-326–Leu-346 form a disordered region. Positions His-328 to Leu-346 are enriched in polar residues. Thr-337 bears the Phosphothreonine mark. Ser-343 carries the phosphoserine; by ATM modification. The residue at position 347 (Ser-347) is a Phosphoserine. At Lys-388 the chain carries N6-lactoyllysine. Disordered regions lie at residues Leu-396–Ser-415 and Leu-431–Met-475. The residue at position 397 (Ser-397) is a Phosphoserine. Thr-402 is modified (phosphothreonine). 2 stretches are compositionally biased toward polar residues: residues Leu-431 to Asn-440 and Ser-447 to Ser-462. Position 432 is a phosphoserine (Ser-432). Lys-435 is covalently cross-linked (Glycyl lysine isopeptide (Lys-Gly) (interchain with G-Cter in ubiquitin)). The Nuclear localization signal signature appears at Pro-461–Glu-467. A phosphoserine mark is found at Ser-509 and Ser-518. Residues Lys-571 and Lys-582 each participate in a glycyl lysine isopeptide (Lys-Gly) (interchain with G-Cter in SUMO2) cross-link. Ser-615 and Ser-673 each carry phosphoserine. Glycyl lysine isopeptide (Lys-Gly) (interchain with G-Cter in ubiquitin) cross-links involve residues Lys-686, Lys-690, and Lys-735. Positions Ala-740–Tyr-749 match the FxF/Y motif motif.

This sequence belongs to the Nibrin family. As to quaternary structure, component of the MRN complex composed of two heterodimers RAD50 and MRE11 associated with a single NBN. The MRN complexes dimerize on DNA to form joined MRN-MRN oligomers required for DNA double-strand break repair. The MRN complexes dimerize on DNA to form joined MRN-MRN oligomers required for DNA double-strand break repair. As part of the MRN complex, interacts with MCM9; the interaction recruits the complex to DNA repair sites. Component of the BASC complex, at least composed of BRCA1, MSH2, MSH6, MLH1, ATM, BLM, RAD50, MRE11 and NBN. Interacts with histone H2AX; this requires phosphorylation of H2AX on 'Ser-139' and promotes NBN recruitment to DNA damage sites. Interacts with (phosphorylated) MDC1; promoting NBN recruitment to DNA damage sites. Interacts with (phosphorylated) RAD17; promoting NBN recruitment to DNA damage sites. Interacts (via FxF/Y motif) with ATM. Interacts with HJURP. Interacts with INTS3. Interacts with KPNA2. Interacts with TERF2; interaction is disrupted upon NBN phosphorylation by CDK2. Interacts with (phosphorylated) RBBP8/CtIP; the interaction links the role of the MRN complex in DNA double-strand break sensing to resection. Interacts with SP100; recruits NBN to PML bodies. Interacts with ATF2. Interacts with MTOR, MAPKAP1 isoform 2 and RICTOR; indicative for an association with the mTORC2 complex. Interacts with MRNIP. Interacts with UFL1; promoting UFL1 recruitment to double-strand breaks following DNA damage. Interacts with CYREN (via XLF motif). Phosphorylated by ATM in response of ionizing radiation, and such phosphorylation is responsible intra-S phase checkpoint control and telomere maintenance. Phosphorylated at Ser-432 by CDK2 in S/G2 phases abolishes interaction with TERF2, enabling DCLRE1B/Apollo recruitment to telomeres. Phosphorylation at Ser-432 in response to dysfunctional telomeres promotes non-homologous end joining repair at telomeres, while dephosphorylation by PPP1CA promotes microhomology-mediated end-joining (MMEJ) repair. Post-translationally, ubiquitinated at Lys-435 via 'Lys-6'-linked ubiquitin chains by RNF8, promoting NBN recruitment to DNA double-strand breaks (DSBs). Ubiquitinated at Lys-686 and Lys-689 via 'Lys-63'-linked ubiquitin chains by PELI1: ubiquitination takes place following PELI1 phosphorylation and promotes ATM activation and DNA repair. Ubiquitinated at Lys-735 via 'Lys-63'-linked ubiquitin chains by the SCF(SKP2) complex: ubiquitination takes place following SKP2 phosphorylation and promotes ATM activation and DNA repair. In terms of processing, lactylation at Lys-388 by KAT5 in response to DNA damage promotes recruitment of the MRN complex to DNA damage sites. Delactylated by HDAC3.

The protein resides in the nucleus. It is found in the chromosome. It localises to the PML body. Its subcellular location is the telomere. Component of the MRN complex, which plays a central role in double-strand break (DSB) repair, DNA recombination, maintenance of telomere integrity and meiosis. The MRN complex is involved in the repair of DNA double-strand breaks (DSBs) via homologous recombination (HR), an error-free mechanism which primarily occurs during S and G2 phases. The complex (1) mediates the end resection of damaged DNA, which generates proper single-stranded DNA, a key initial steps in HR, and is (2) required for the recruitment of other repair factors and efficient activation of ATM and ATR upon DNA damage. The MRN complex possesses single-strand endonuclease activity and double-strand-specific 3'-5' exonuclease activity, which are provided by MRE11, to initiate end resection, which is required for single-strand invasion and recombination. Within the MRN complex, NBN acts as a protein-protein adapter, which specifically recognizes and binds phosphorylated proteins, promoting their recruitment to DNA damage sites. Recruits MRE11 and RAD50 components of the MRN complex to DSBs in response to DNA damage. Promotes the recruitment of PI3/PI4-kinase family members ATM, ATR, and probably DNA-PKcs to the DNA damage sites, activating their functions. Mediates the recruitment of phosphorylated RBBP8/CtIP to DSBs, leading to cooperation between the MRN complex and RBBP8/CtIP to initiate end resection. RBBP8/CtIP specifically promotes the endonuclease activity of the MRN complex to clear DNA ends containing protein adducts. The MRN complex is also required for the processing of R-loops. NBN also functions in telomere length maintenance via its interaction with TERF2: interaction with TERF2 during G1 phase preventing recruitment of DCLRE1B/Apollo to telomeres. NBN also promotes DNA repair choice at dysfunctional telomeres: NBN phosphorylation by CK2 promotes non-homologous end joining repair at telomeres, while unphosphorylated NBN promotes microhomology-mediated end-joining (MMEJ) repair. Enhances AKT1 phosphorylation possibly by association with the mTORC2 complex. The chain is Nibrin (NBN) from Pongo abelii (Sumatran orangutan).